We begin with the raw amino-acid sequence, 344 residues long: Histone-lysine N-methyltransferase, H3 lysine-9 specific KMT1 (344 aa).

Residues serine 79–glycine 174 enclose the Pre-SET domain. Zn(2+) is bound by residues cysteine 81, cysteine 83, cysteine 89, cysteine 94, cysteine 96, cysteine 156, cysteine 160, cysteine 162, cysteine 166, and cysteine 272. Residues isoleucine 177–valine 312 enclose the SET domain. Tyrosine 311 contributes to the S-adenosyl-L-methionine binding site. Residues histidine 328–tryptophan 344 enclose the Post-SET domain. Residues cysteine 332, cysteine 334, and cysteine 339 each coordinate Zn(2+).

It belongs to the class V-like SAM-binding methyltransferase superfamily.

It is found in the chromosome. It catalyses the reaction L-lysyl(9)-[histone H3] + 3 S-adenosyl-L-methionine = N(6),N(6),N(6)-trimethyl-L-lysyl(9)-[histone H3] + 3 S-adenosyl-L-homocysteine + 3 H(+). In terms of biological role, histone methyltransferase that specifically trimethylates histone H3 to form H3K9me3. H3K9me3 marks chromatin regions for DNA methylation. Plays a key role in the regulation of the biosynthesis of the gamma-pyrones fusapyrone (FPY) and deoxyfusapyrone (dFPY). This is Histone-lysine N-methyltransferase, H3 lysine-9 specific KMT1 from Fusarium mangiferae (Mango malformation disease fungus).